Reading from the N-terminus, the 206-residue chain is Potassium-transporting ATPase KdpC subunit (206 aa).

The helical transmembrane segment at 14-34 threads the bilayer; it reads VLAVFTLFGLGLAYSLIATGI.

It belongs to the KdpC family. The system is composed of three essential subunits: KdpA, KdpB and KdpC.

The protein localises to the cell inner membrane. Part of the high-affinity ATP-driven potassium transport (or Kdp) system, which catalyzes the hydrolysis of ATP coupled with the electrogenic transport of potassium into the cytoplasm. This subunit acts as a catalytic chaperone that increases the ATP-binding affinity of the ATP-hydrolyzing subunit KdpB by the formation of a transient KdpB/KdpC/ATP ternary complex. The chain is Potassium-transporting ATPase KdpC subunit from Xanthomonas axonopodis pv. citri (strain 306).